A 154-amino-acid polypeptide reads, in one-letter code: Myoglobin (154 aa).

The region spanning 2–148 is the Globin domain; it reads GLSDGEWQQV…FRNDIAAKYK (147 aa). The residue at position 4 (serine 4) is a Phosphoserine. Histidine 65 lines the nitrite pocket. Histidine 65 is a binding site for O2. Histidine 94 serves as a coordination point for heme b.

This sequence belongs to the globin family. Monomeric.

The protein resides in the cytoplasm. It localises to the sarcoplasm. It carries out the reaction Fe(III)-heme b-[protein] + nitric oxide + H2O = Fe(II)-heme b-[protein] + nitrite + 2 H(+). The catalysed reaction is H2O2 + AH2 = A + 2 H2O. In terms of biological role, monomeric heme protein which primary function is to store oxygen and facilitate its diffusion within muscle tissues. Reversibly binds oxygen through a pentacoordinated heme iron and enables its timely and efficient release as needed during periods of heightened demand. Depending on the oxidative conditions of tissues and cells, and in addition to its ability to bind oxygen, it also has a nitrite reductase activity whereby it regulates the production of bioactive nitric oxide. Under stress conditions, like hypoxia and anoxia, it also protects cells against reactive oxygen species thanks to its pseudoperoxidase activity. The protein is Myoglobin (MB) of Equus quagga burchellii (Burchell's zebra).